Reading from the N-terminus, the 428-residue chain is Phosphomethylpyrimidine synthase 2 (428 aa).

Residues Met-94, Tyr-123, His-162, 184-186 (SRG), 225-228 (NGMR), and Glu-264 contribute to the substrate site. His-268 contributes to the Zn(2+) binding site. Residue Tyr-291 participates in substrate binding. His-332 contacts Zn(2+). [4Fe-4S] cluster contacts are provided by Cys-408, Cys-411, and Cys-415.

Belongs to the ThiC family. The cofactor is [4Fe-4S] cluster.

The enzyme catalyses 5-amino-1-(5-phospho-beta-D-ribosyl)imidazole + S-adenosyl-L-methionine = 4-amino-2-methyl-5-(phosphooxymethyl)pyrimidine + CO + 5'-deoxyadenosine + formate + L-methionine + 3 H(+). It participates in cofactor biosynthesis; thiamine diphosphate biosynthesis. Its function is as follows. Catalyzes the synthesis of the hydroxymethylpyrimidine phosphate (HMP-P) moiety of thiamine from aminoimidazole ribotide (AIR) in a radical S-adenosyl-L-methionine (SAM)-dependent reaction. The protein is Phosphomethylpyrimidine synthase 2 of Methanosarcina mazei (strain ATCC BAA-159 / DSM 3647 / Goe1 / Go1 / JCM 11833 / OCM 88) (Methanosarcina frisia).